The sequence spans 284 residues: 2-dehydro-3-deoxyphosphooctonate aldolase (284 aa).

This sequence belongs to the KdsA family.

It localises to the cytoplasm. It carries out the reaction D-arabinose 5-phosphate + phosphoenolpyruvate + H2O = 3-deoxy-alpha-D-manno-2-octulosonate-8-phosphate + phosphate. The protein operates within carbohydrate biosynthesis; 3-deoxy-D-manno-octulosonate biosynthesis; 3-deoxy-D-manno-octulosonate from D-ribulose 5-phosphate: step 2/3. Its pathway is bacterial outer membrane biogenesis; lipopolysaccharide biosynthesis. The protein is 2-dehydro-3-deoxyphosphooctonate aldolase of Escherichia coli O6:K15:H31 (strain 536 / UPEC).